The following is a 249-amino-acid chain: Bax inhibitor 1 (249 aa).

The next 6 membrane-spanning stretches (helical) occupy residues 39–59 (LVYL…YLHV), 65–85 (GMLT…VPVF), 93–113 (ILLA…KLAV), 119–139 (ILVT…CAAI), 151–171 (GLLS…SIFG), and 213–233 (HALT…VIML).

It belongs to the BI1 family. Ubiquitous.

It localises to the membrane. Functionally, suppressor of apoptosis. The sequence is that of Bax inhibitor 1 (BI1) from Oryza sativa subsp. japonica (Rice).